Here is a 261-residue protein sequence, read N- to C-terminus: uncharacterized protein (261 aa).

This is an uncharacterized protein from Saccharomyces cerevisiae (strain ATCC 204508 / S288c) (Baker's yeast).